Here is a 567-residue protein sequence, read N- to C-terminus: PHD finger protein 1 (567 aa).

Residues 1–31 (MAQPPRLSRSGASSLWDPASPAPTSGPRPRL) form a disordered region. The 58-residue stretch at 29 to 86 (PRLWEGQDVLARWTDGLLYLGTIKKVDSAREVCLVQFEDDSQFLVLWKDISPAALPGE) folds into the Tudor domain. PHD-type zinc fingers lie at residues 87–142 (ELLC…CVFA) and 186–240 (QSYC…CRGG). Disordered regions lie at residues 333–441 (ARMP…TDAR) and 455–537 (HPSA…GYLS). G360 carries the post-translational modification Phosphoserine. Positions 371–386 (PEPEPLRRRQKGKVEE) are enriched in basic and acidic residues. A Phosphoserine modification is found at S420. Low complexity-rich tracts occupy residues 423–433 (PNQSYQGSSGY), 456–470 (PSASTAGTSGDSGPP), and 488–510 (SAPHSMTASSSSVSSPSPGLPRR). Gly residues predominate over residues 524–534 (GTGGGVRGGVG).

This sequence belongs to the Polycomblike family. In terms of assembly, interacts with CHMP1. Associated component of the PRC2 complex. Interacts with p53/TP53. In terms of tissue distribution, highest levels in heart, skeletal muscle, and pancreas, lower levels in brain, placenta, lung, liver and kidney.

The protein localises to the nucleus. It localises to the cytoplasm. It is found in the cytoskeleton. Its subcellular location is the microtubule organizing center. The protein resides in the centrosome. In terms of biological role, polycomb group (PcG) that specifically binds histone H3 trimethylated at 'Lys-36' (H3K36me3) and recruits the PRC2 complex. Involved in DNA damage response and is recruited at double-strand breaks (DSBs). Acts by binding to H3K36me3, a mark for transcriptional activation, and recruiting the PRC2 complex: it is however unclear whether recruitment of the PRC2 complex to H3K36me3 leads to enhance or inhibit H3K27me3 methylation mediated by the PRC2 complex. According to some reports, PRC2 recruitment by PHF1 promotes H3K27me3 and subsequent gene silencing by inducing spreading of PRC2 and H3K27me3 into H3K36me3 loci. According to another report, PHF1 recruits the PRC2 complex at double-strand breaks (DSBs) and inhibits the activity of PRC2. Regulates p53/TP53 stability and prolonges its turnover: may act by specifically binding to a methylated from of p53/TP53. In Homo sapiens (Human), this protein is PHD finger protein 1 (PHF1).